Reading from the N-terminus, the 194-residue chain is dTTP/UTP pyrophosphatase (194 aa).

D76 serves as the catalytic Proton acceptor.

It belongs to the Maf family. YhdE subfamily. The cofactor is a divalent metal cation.

It localises to the cytoplasm. The enzyme catalyses dTTP + H2O = dTMP + diphosphate + H(+). It carries out the reaction UTP + H2O = UMP + diphosphate + H(+). Its function is as follows. Nucleoside triphosphate pyrophosphatase that hydrolyzes dTTP and UTP. May have a dual role in cell division arrest and in preventing the incorporation of modified nucleotides into cellular nucleic acids. The chain is dTTP/UTP pyrophosphatase from Shewanella sp. (strain MR-7).